A 398-amino-acid chain; its full sequence is Homeobox protein knotted-1-like 1 (398 aa).

Disordered regions lie at residues 43 to 69 (TFHL…PGTH), 172 to 192 (EFEA…DPEL), and 234 to 277 (NNNA…PRAE). A compositionally biased stretch (gly residues) spans 49–58 (SGGGGGGGSG). An ELK domain is found at 280-300 (ELKNHLLRKYSGYLSSLKQEL). Positions 301-364 (SKKKKKGKLP…NQRKRHWKPS (64 aa)) form a DNA-binding region, homeobox; TALE-type.

This sequence belongs to the TALE/KNOX homeobox family. In terms of tissue distribution, expressed only in the stems.

Its subcellular location is the nucleus. In terms of biological role, probably binds to the DNA sequence 5'-TGAC-3'. The sequence is that of Homeobox protein knotted-1-like 1 from Malus domestica (Apple).